Here is a 503-residue protein sequence, read N- to C-terminus: Lysine--tRNA ligase (503 aa).

E410 and E417 together coordinate Mg(2+).

The protein belongs to the class-II aminoacyl-tRNA synthetase family. As to quaternary structure, homodimer. Requires Mg(2+) as cofactor.

The protein resides in the cytoplasm. It catalyses the reaction tRNA(Lys) + L-lysine + ATP = L-lysyl-tRNA(Lys) + AMP + diphosphate. This Prochlorococcus marinus (strain MIT 9211) protein is Lysine--tRNA ligase.